The following is a 196-amino-acid chain: dITP/XTP pyrophosphatase (196 aa).

9 to 14 (TSNAGK) is a substrate binding site. Mg(2+)-binding residues include Glu39 and Asp68. The Proton acceptor role is filled by Asp68. Substrate is bound by residues Ser69, 147 to 150 (FGYD), Lys170, and 175 to 176 (HR).

This sequence belongs to the HAM1 NTPase family. Homodimer. Mg(2+) is required as a cofactor.

It catalyses the reaction XTP + H2O = XMP + diphosphate + H(+). The catalysed reaction is dITP + H2O = dIMP + diphosphate + H(+). It carries out the reaction ITP + H2O = IMP + diphosphate + H(+). Its function is as follows. Pyrophosphatase that catalyzes the hydrolysis of nucleoside triphosphates to their monophosphate derivatives, with a high preference for the non-canonical purine nucleotides XTP (xanthosine triphosphate), dITP (deoxyinosine triphosphate) and ITP. Seems to function as a house-cleaning enzyme that removes non-canonical purine nucleotides from the nucleotide pool, thus preventing their incorporation into DNA/RNA and avoiding chromosomal lesions. In Nostoc sp. (strain PCC 7120 / SAG 25.82 / UTEX 2576), this protein is dITP/XTP pyrophosphatase.